Consider the following 149-residue polypeptide: 3-dehydroquinate dehydratase (149 aa).

Y26 serves as the catalytic Proton acceptor. N77, H83, and D90 together coordinate substrate. Catalysis depends on H103, which acts as the Proton donor. Residues 104–105 (LS) and R114 each bind substrate.

Belongs to the type-II 3-dehydroquinase family. Homododecamer.

The enzyme catalyses 3-dehydroquinate = 3-dehydroshikimate + H2O. Its pathway is metabolic intermediate biosynthesis; chorismate biosynthesis; chorismate from D-erythrose 4-phosphate and phosphoenolpyruvate: step 3/7. Its function is as follows. Catalyzes a trans-dehydration via an enolate intermediate. The protein is 3-dehydroquinate dehydratase of Aeromonas salmonicida (strain A449).